A 107-amino-acid polypeptide reads, in one-letter code: Large ribosomal subunit protein P2-A (107 aa).

A disordered region spans residues 85–107 (GAAAPAAAAEEEEDDDMGFGLFD).

The protein belongs to the eukaryotic ribosomal protein P1/P2 family. As to quaternary structure, P1 and P2 exist as dimers at the large ribosomal subunit. Phosphorylated.

Plays an important role in the elongation step of protein synthesis. This chain is Large ribosomal subunit protein P2-A, found in Trypanosoma cruzi.